Here is a 197-residue protein sequence, read N- to C-terminus: Phosphoheptose isomerase (197 aa).

The SIS domain occupies 37 to 197; that stretch reads MLQCLMNDGK…CIDSVLLEGM (161 aa). Residue 52–54 participates in substrate binding; sequence NGG. The Zn(2+) site is built by histidine 61 and glutamate 65. Residues glutamate 65, 94–95, 120–122, serine 125, and glutamine 175 each bind substrate; these read ND and STS. Glutamine 175 and histidine 183 together coordinate Zn(2+).

This sequence belongs to the SIS family. GmhA subfamily. In terms of assembly, homotetramer. The cofactor is Zn(2+).

The protein resides in the cytoplasm. It catalyses the reaction 2 D-sedoheptulose 7-phosphate = D-glycero-alpha-D-manno-heptose 7-phosphate + D-glycero-beta-D-manno-heptose 7-phosphate. Its pathway is carbohydrate biosynthesis; D-glycero-D-manno-heptose 7-phosphate biosynthesis; D-glycero-alpha-D-manno-heptose 7-phosphate and D-glycero-beta-D-manno-heptose 7-phosphate from sedoheptulose 7-phosphate: step 1/1. It functions in the pathway bacterial outer membrane biogenesis; LOS core biosynthesis. Its function is as follows. Catalyzes the isomerization of sedoheptulose 7-phosphate in D-glycero-D-manno-heptose 7-phosphate. The sequence is that of Phosphoheptose isomerase from Neisseria meningitidis serogroup A / serotype 4A (strain DSM 15465 / Z2491).